The chain runs to 479 residues: UDP-N-acetylmuramate--L-alanine ligase (479 aa).

114–120 (GTHGKTT) contacts ATP.

It belongs to the MurCDEF family.

It localises to the cytoplasm. The enzyme catalyses UDP-N-acetyl-alpha-D-muramate + L-alanine + ATP = UDP-N-acetyl-alpha-D-muramoyl-L-alanine + ADP + phosphate + H(+). It participates in cell wall biogenesis; peptidoglycan biosynthesis. In terms of biological role, cell wall formation. The chain is UDP-N-acetylmuramate--L-alanine ligase from Pelodictyon phaeoclathratiforme (strain DSM 5477 / BU-1).